Here is a 478-residue protein sequence, read N- to C-terminus: Glycogen synthase (478 aa).

Lys-15 is an ADP-alpha-D-glucose binding site.

This sequence belongs to the glycosyltransferase 1 family. Bacterial/plant glycogen synthase subfamily.

It carries out the reaction [(1-&gt;4)-alpha-D-glucosyl](n) + ADP-alpha-D-glucose = [(1-&gt;4)-alpha-D-glucosyl](n+1) + ADP + H(+). It functions in the pathway glycan biosynthesis; glycogen biosynthesis. Synthesizes alpha-1,4-glucan chains using ADP-glucose. In Actinobacillus pleuropneumoniae serotype 5b (strain L20), this protein is Glycogen synthase.